Reading from the N-terminus, the 326-residue chain is Beta-ketoacyl-[acyl-carrier-protein] synthase III (326 aa).

Catalysis depends on residues cysteine 112 and histidine 251. The segment at 252-256 (QANSR) is ACP-binding. Asparagine 281 is an active-site residue.

The protein belongs to the thiolase-like superfamily. FabH family. As to quaternary structure, homodimer.

The protein localises to the cytoplasm. It carries out the reaction malonyl-[ACP] + acetyl-CoA + H(+) = 3-oxobutanoyl-[ACP] + CO2 + CoA. Its pathway is lipid metabolism; fatty acid biosynthesis. In terms of biological role, catalyzes the condensation reaction of fatty acid synthesis by the addition to an acyl acceptor of two carbons from malonyl-ACP. Catalyzes the first condensation reaction which initiates fatty acid synthesis and may therefore play a role in governing the total rate of fatty acid production. Possesses both acetoacetyl-ACP synthase and acetyl transacylase activities. Its substrate specificity determines the biosynthesis of branched-chain and/or straight-chain of fatty acids. This chain is Beta-ketoacyl-[acyl-carrier-protein] synthase III, found in Clostridium botulinum (strain 657 / Type Ba4).